The chain runs to 458 residues: Probable M18 family aminopeptidase 1 (458 aa).

Zn(2+)-binding residues include H95, H170, and H434.

Belongs to the peptidase M18 family. Zn(2+) serves as cofactor.

This Borreliella burgdorferi (strain ATCC 35210 / DSM 4680 / CIP 102532 / B31) (Borrelia burgdorferi) protein is Probable M18 family aminopeptidase 1 (apeA).